A 464-amino-acid chain; its full sequence is Ubiquinone biosynthesis monooxygenase COQ6, mitochondrial (464 aa).

A mitochondrion-targeting transit peptide spans 1 to 24; the sequence is MRCLGGSSLSRLLRMLSQSQGRAL.

It belongs to the UbiH/COQ6 family. As to quaternary structure, component of a multi-subunit COQ enzyme complex, composed of at least coq3, coq4, coq5, coq6, coq7 and coq9. Interacts with coq8b and coq7. It depends on FAD as a cofactor.

Its subcellular location is the mitochondrion inner membrane. The protein localises to the golgi apparatus. It is found in the cell projection. The catalysed reaction is a 4-hydroxy-3-(all-trans-polyprenyl)benzoate + 2 reduced [2Fe-2S]-[ferredoxin] + O2 + 2 H(+) = a 3,4-dihydroxy-5-(all-trans-polyprenyl)benzoate + 2 oxidized [2Fe-2S]-[ferredoxin] + H2O. It catalyses the reaction a 2-methoxy-6-(all-trans-polyprenyl)phenol + 2 reduced [2Fe-2S]-[ferredoxin] + O2 + 2 H(+) = a 2-methoxy-6-(all-trans-polyprenyl)benzene-1,4-diol + 2 oxidized [2Fe-2S]-[ferredoxin] + H2O. It participates in cofactor biosynthesis; ubiquinone biosynthesis. Functionally, FAD-dependent monooxygenase required for two non-consecutive steps during ubiquinone biosynthesis. Required for the C5-ring hydroxylation during ubiquinone biosynthesis by catalyzing the hydroxylation of 4-hydroxy-3-(all-trans-polyprenyl)benzoic acid to 3,4-dihydroxy-5-(all-trans-polyprenyl)benzoic acid. Also acts downstream of coq4, for the C1-hydroxylation during ubiquinone biosynthesis by catalyzing the hydroxylation of 2-methoxy-6-(all-trans-polyprenyl)phenol to 2-methoxy-6-(all-trans-polyprenyl)benzene-1,4-diol. The electrons required for the hydroxylation reaction are funneled indirectly to coq6 from NADPH via a ferredoxin/ferredoxin reductase system. The protein is Ubiquinone biosynthesis monooxygenase COQ6, mitochondrial of Xenopus tropicalis (Western clawed frog).